An 897-amino-acid polypeptide reads, in one-letter code: 4-hydroxyphenylacetate decarboxylase glycyl radical subunit (897 aa).

The PFL domain occupies 35-770 (ESTQKLMDIY…VTLATADGRL (736 aa)). 2 residues coordinate 4-hydroxyphenylacetate: Ser344 and Cys503. The Cysteine radical intermediate role is filled by Cys503. The Proton donor role is filled by Glu505. Residues His536 and Glu637 each contribute to the 4-hydroxyphenylacetate site. The 120-residue stretch at 778–897 (GSVSAAAGTD…EVIYRTEYDK (120 aa)) folds into the Glycine radical domain. Glycine radical is present on Gly873.

The protein belongs to the glycyl radical enzyme (GRE) family. HPAD subfamily. In terms of assembly, heterooctamer consisting of 4 large (HpdB) subunits and 4 small (HpdC) subunits, arranged as a tetramer of heterodimers. Also forms a catalytically inactive homodimer. Requires the activating protein CsdA to generate the key active site glycyl radical that is involved in catalysis. Post-translationally, phosphorylated on serine. Phosphorylation may trigger the formation of the active heterooctamers and thereby regulates enzyme activity.

The enzyme catalyses 4-hydroxyphenylacetate + H(+) = 4-methylphenol + CO2. It carries out the reaction 3,4-dihydroxyphenylacetate + H(+) = 4-methylcatechol + CO2. Functionally, glycyl radical subunit of the HPA decarboxylase that decarboxylates phenylacetates with a hydroxyl group in the p-position. Active toward 4-hydroxyphenylacetate and 3,4-dihydroxyphenylacetate, forming 4-methylphenol and 4-methylcatechol, respectively. Is likely involved in the catabolism of aromatic amino acids such as tyrosine fermentation. 4-methylphenol (p-cresol) formation provides metabolic toxicity, which allows an active suppression of other microbes and may provide growth advantages for the producers in highly competitive environments. The large subunit is the catalytic subunit that binds the substrate. This is 4-hydroxyphenylacetate decarboxylase glycyl radical subunit from Clostridium scatologenes.